Here is a 239-residue protein sequence, read N- to C-terminus: Ribonuclease PH (239 aa).

Phosphate is bound by residues Arg-87 and Gly-125–Arg-127.

Belongs to the RNase PH family. Homohexameric ring arranged as a trimer of dimers.

The catalysed reaction is tRNA(n+1) + phosphate = tRNA(n) + a ribonucleoside 5'-diphosphate. Functionally, phosphorolytic 3'-5' exoribonuclease that plays an important role in tRNA 3'-end maturation. Removes nucleotide residues following the 3'-CCA terminus of tRNAs; can also add nucleotides to the ends of RNA molecules by using nucleoside diphosphates as substrates, but this may not be physiologically important. Probably plays a role in initiation of 16S rRNA degradation (leading to ribosome degradation) during starvation. The chain is Ribonuclease PH from Acaryochloris marina (strain MBIC 11017).